The chain runs to 236 residues: MEKREELYRGKAKSVYKTDDADRLILLFRNDTSAFDGKRIEQLDRKGMVNNKFNAFIMQKLEEAGVPTQFDKLLGDNECLVKKLDMIPVECVVRNYAAGSLVKRLGVEEGIKLEPSTFELFLKNDEKGDPFINESHVVAFGWGTAEQLAEMKKLSLKVNEVLNKLFDDAGLLLVDFKLEFGVFHGQIVLGDEFSPDGCRLWDKETRKKMDKDRFRQGLGDVIEAYEEVAKRLGVPL.

Belongs to the SAICAR synthetase family.

It catalyses the reaction 5-amino-1-(5-phospho-D-ribosyl)imidazole-4-carboxylate + L-aspartate + ATP = (2S)-2-[5-amino-1-(5-phospho-beta-D-ribosyl)imidazole-4-carboxamido]succinate + ADP + phosphate + 2 H(+). It functions in the pathway purine metabolism; IMP biosynthesis via de novo pathway; 5-amino-1-(5-phospho-D-ribosyl)imidazole-4-carboxamide from 5-amino-1-(5-phospho-D-ribosyl)imidazole-4-carboxylate: step 1/2. This chain is Phosphoribosylaminoimidazole-succinocarboxamide synthase, found in Pseudomonas putida (strain W619).